The sequence spans 495 residues: Putative aldehyde dehydrogenase DhaS (495 aa).

244 to 249 serves as a coordination point for NAD(+); it reads GSTEIG. Active-site residues include E266 and C300.

The protein belongs to the aldehyde dehydrogenase family.

It carries out the reaction an aldehyde + NAD(+) + H2O = a carboxylate + NADH + 2 H(+). The polypeptide is Putative aldehyde dehydrogenase DhaS (dhaS) (Bacillus subtilis (strain 168)).